Reading from the N-terminus, the 480-residue chain is Uridine 5'-monophosphate synthase (480 aa).

Ala2 carries the post-translational modification N-acetylalanine. The OPRTase stretch occupies residues Ala2–Ser214. Tyr37 carries the phosphotyrosine modification. The residue at position 214 (Ser214) is a Phosphoserine. Residues Leu215 to Lys220 are domain linker. Positions Glu221–Val480 are OMPdecase. Ser257 contributes to the orotidine 5'-phosphate binding site. Residues Ser257, Asp259, and Lys281–His283 each bind UMP. Residues Lys281, Lys314, Asp317, Thr321, Ser372, Gln430–Tyr432, and Gly450–Arg451 contribute to the orotidine 5'-phosphate site. Residues Lys314 and Asp317 each act as for OMPdecase activity in the active site. UMP contacts are provided by residues Asp317, Thr321, Ser372, Gln430–Tyr432, and Gly450–Arg451.

In the N-terminal section; belongs to the purine/pyrimidine phosphoribosyltransferase family. It in the C-terminal section; belongs to the OMP decarboxylase family. As to quaternary structure, homodimer; dimerization is required for enzymatic activity.

It carries out the reaction orotidine 5'-phosphate + diphosphate = orotate + 5-phospho-alpha-D-ribose 1-diphosphate. It catalyses the reaction orotidine 5'-phosphate + H(+) = UMP + CO2. It functions in the pathway pyrimidine metabolism; UMP biosynthesis via de novo pathway; UMP from orotate: step 1/2. Its pathway is pyrimidine metabolism; UMP biosynthesis via de novo pathway; UMP from orotate: step 2/2. In terms of biological role, bifunctional enzyme catalyzing the last two steps of de novo pyrimidine biosynthesis, orotate phosphoribosyltransferase (OPRT), which converts orotate to orotidine-5'-monophosphate (OMP), and orotidine-5'-monophosphate decarboxylase (ODC), the terminal enzymatic reaction that decarboxylates OMP to uridine monophosphate (UMP). This Bos taurus (Bovine) protein is Uridine 5'-monophosphate synthase (UMPS).